The sequence spans 68 residues: U1-agatoxin-Ta1c (68 aa).

Residues 1-17 (MKLQLMICLVLLPCFFC) form the signal peptide. 3 disulfide bridges follow: C23-C53, C39-C49, and C42-C62. The residue at position 67 (K67) is a Lysine amide.

Belongs to the helical arthropod-neuropeptide-derived (HAND) family. Expressed by the venom gland.

Its subcellular location is the secreted. In terms of biological role, toxin that paralyzes insects. May have a direct effect on the insect central nervous system. The protein is U1-agatoxin-Ta1c of Eratigena agrestis (Hobo spider).